The following is a 456-amino-acid chain: Trigger factor (456 aa).

The PPIase FKBP-type domain occupies 192-277 (GDTVVIDFVG…IHEVKTKEVP (86 aa)).

The protein belongs to the FKBP-type PPIase family. Tig subfamily.

It localises to the cytoplasm. It catalyses the reaction [protein]-peptidylproline (omega=180) = [protein]-peptidylproline (omega=0). Functionally, involved in protein export. Acts as a chaperone by maintaining the newly synthesized protein in an open conformation. Functions as a peptidyl-prolyl cis-trans isomerase. The protein is Trigger factor of Streptococcus pyogenes serotype M2 (strain MGAS10270).